Consider the following 22-residue polypeptide: Motilin (22 aa).

Residues 1 to 22 form a disordered region; it reads FVPIFTHSELQKIREKERNKGQ. Over residues 9–22 the composition is skewed to basic and acidic residues; that stretch reads ELQKIREKERNKGQ.

Belongs to the motilin family.

Its subcellular location is the secreted. In terms of biological role, plays an important role in the regulation of interdigestive gastrointestinal motility and indirectly causes rhythmic contraction of duodenal and colonic smooth muscle. This is Motilin (MLN) from Canis lupus familiaris (Dog).